The sequence spans 305 residues: Putative beta-lactamase HcpD (305 aa).

The first 27 residues, Met-1–Thr-27, serve as a signal peptide directing secretion. TPR repeat units follow at residues Gly-28–Val-61, His-96–Val-133, Gly-168–Ala-205, and Gly-240–Gly-277. 7 disulfides stabilise this stretch: Cys-55–Cys-63, Cys-91–Cys-99, Cys-127–Cys-135, Cys-163–Cys-171, Cys-199–Cys-207, Cys-235–Cys-243, and Cys-271–Cys-279.

It belongs to the hcp beta-lactamase family.

It is found in the secreted. It catalyses the reaction a beta-lactam + H2O = a substituted beta-amino acid. Its function is as follows. May hydrolyze 6-aminopenicillinic acid and 7-aminocephalosporanic acid (ACA) derivatives. Binds to penicillin. The protein is Putative beta-lactamase HcpD (hcpD) of Helicobacter pylori (strain J99 / ATCC 700824) (Campylobacter pylori J99).